The primary structure comprises 357 residues: Homoarginine-6-hydroxylase 2-ODD-C23.2 (357 aa).

The Fe2OG dioxygenase domain maps to 208–308 (PFWVMRIIGY…RVCVAFFYET (101 aa)). Fe cation is bound by residues His231, Asp233, and His289. Arg299 contacts 2-oxoglutarate.

This sequence belongs to the iron/ascorbate-dependent oxidoreductase family. Fe(2+) serves as cofactor. As to expression, expressed in senescent leaves.

The protein localises to the cytoplasm. Its subcellular location is the cytosol. It catalyses the reaction L-homoarginine + 2-oxoglutarate + O2 = 6-hydroxy-L-homoarginine + succinate + CO2. The enzyme catalyses L-arginine + 2-oxoglutarate + O2 = 5-hydroxy-L-arginine + succinate + CO2. Slightly inhibited by canavanine (Can), the 5-oxa-analog of arginine. 2-oxoglutarate-dependent dioxygenase catalyzing homoarginine 6-hydroxylation and arginine-5-hydroxylation thus producing 6-hydroxy-L-homoarginine and 5-hydroxy-L-arginine, respectively. Guanidine (Gd) is in turn synthesized by the spontaneous conversion of 6-hydroxy-L-homoarginine and 5-hydroxy-L-arginine to (S)-2-amino-6-oxohexanoate (RHEA:79843) and L-glutamate 5-semialdehyde (RHEA:31527); guanidine is a nitrogen-rich compound that may serve as a defense or signaling substance. The protein is Homoarginine-6-hydroxylase 2-ODD-C23.2 of Arabidopsis thaliana (Mouse-ear cress).